The chain runs to 462 residues: uncharacterized protein (462 aa).

Residues 1-108 (MEDSNTNKDI…NGQDDQDEMD (108 aa)) form a disordered region. Residues 36–51 (TVERILERKQKERESK) show a composition bias toward basic and acidic residues. Positions 64-95 (SSPSSLLSSPISSNDNNNNNNNNNNESFDINN) are enriched in low complexity. Residues 119 to 150 (LLKRKAALAAKKKESLAEQMKKYNQQYDSIIS) are a coiled coil. Positions 188–208 (SKLQSLNNNTSPSTSSSNLID) are disordered. Positions 190–208 (LQSLNNNTSPSTSSSNLID) are enriched in low complexity.

This is an uncharacterized protein from Dictyostelium discoideum (Social amoeba).